The following is a 241-amino-acid chain: Ribonuclease PH (241 aa).

Residues Arg89 and 127–129 contribute to the phosphate site; that span reads GTR.

Belongs to the RNase PH family. In terms of assembly, homohexameric ring arranged as a trimer of dimers.

It catalyses the reaction tRNA(n+1) + phosphate = tRNA(n) + a ribonucleoside 5'-diphosphate. Phosphorolytic 3'-5' exoribonuclease that plays an important role in tRNA 3'-end maturation. Removes nucleotide residues following the 3'-CCA terminus of tRNAs; can also add nucleotides to the ends of RNA molecules by using nucleoside diphosphates as substrates, but this may not be physiologically important. Probably plays a role in initiation of 16S rRNA degradation (leading to ribosome degradation) during starvation. This Stenotrophomonas maltophilia (strain K279a) protein is Ribonuclease PH.